We begin with the raw amino-acid sequence, 119 residues long: Large ribosomal subunit protein P3z (119 aa).

Gly residues predominate over residues 79-90; that stretch reads AGGAASSGGGAG. The tract at residues 79–119 is disordered; sequence AGGAASSGGGAGEAAAAPKEDEKKKEESEEEEGDFGFDLFG. Basic and acidic residues predominate over residues 96–105; the sequence is PKEDEKKKEE.

The protein belongs to the eukaryotic ribosomal protein P1/P2 family. Post-translationally, phosphorylated.

In terms of biological role, plays an important role in the elongation step of protein synthesis. The chain is Large ribosomal subunit protein P3z (RPP3A) from Arabidopsis thaliana (Mouse-ear cress).